The following is a 355-amino-acid chain: Oligopeptide transport ATP-binding protein AmiE (355 aa).

The 252-residue stretch at 9 to 260 (LTARDIVVEF…PRHPYTWSLL (252 aa)) folds into the ABC transporter domain. Residue 45–52 (GESGSGKS) participates in ATP binding.

The protein belongs to the ABC transporter superfamily.

The protein localises to the cell membrane. In terms of biological role, part of the binding-protein-dependent transport system for oligopeptides. Probably responsible for energy coupling to the transport system. The protein is Oligopeptide transport ATP-binding protein AmiE (amiE) of Streptococcus pneumoniae serotype 4 (strain ATCC BAA-334 / TIGR4).